The following is a 942-amino-acid chain: Probable serine/threonine-protein kinase DDB_G0279719 (942 aa).

One can recognise a Protein kinase domain in the interval 4–617; it reads YEVVKLIGVG…IDLILQNKLF (614 aa). Residues 10 to 18 and Lys33 each bind ATP; that span reads IGVGGEAKA. Disordered regions lie at residues 109-170, 247-303, 352-371, and 408-445; these read NNNQ…INNN, SFSN…NGNT, QPPQ…GADV, and NDPS…LNIN. Residues 258 to 272 are compositionally biased toward low complexity; it reads NSNDSNLHQSSSNSS. Over residues 288–303 the composition is skewed to polar residues; the sequence is SPGTSTPYQKGSNGNT. 2 stretches are compositionally biased toward low complexity: residues 353-367 and 410-432; these read PPQS…SSPT and PSSH…PQSP. Residue Asp487 is the Proton acceptor of the active site. The disordered stretch occupies residues 642–686; sequence TNSKSNSSNNLNNSNSNNDIINNNNNNNSSNNINNNNIVNLNNSY. The stretch at 675–703 forms a coiled coil; the sequence is NNNNIVNLNNSYNNKQDKCEQRNKSLNQN.

This sequence belongs to the protein kinase superfamily. Ser/Thr protein kinase family.

It carries out the reaction L-seryl-[protein] + ATP = O-phospho-L-seryl-[protein] + ADP + H(+). It catalyses the reaction L-threonyl-[protein] + ATP = O-phospho-L-threonyl-[protein] + ADP + H(+). In Dictyostelium discoideum (Social amoeba), this protein is Probable serine/threonine-protein kinase DDB_G0279719.